The chain runs to 318 residues: Lipid A biosynthesis acyltransferase (318 aa).

The helical transmembrane segment at 27-47 threads the bilayer; sequence PQYWGIWLGIFFLLLLAFVPF. The short motif at 145–150 is the HXXXXD motif element; the sequence is HGWAID.

Belongs to the LpxL/LpxM/LpxP family. LpxM subfamily.

It is found in the cell inner membrane. The enzyme catalyses an alpha-Kdo-(2-&gt;4)-alpha-Kdo-(2-&gt;6)-(acyl)-lipid IVA + a fatty acyl-[ACP] = an alpha-Kdo-(2-&gt;4)-alpha-Kdo-(2-&gt;6)-lipid A + holo-[ACP]. It participates in glycolipid biosynthesis; KDO(2)-lipid A biosynthesis; KDO(2)-lipid A from CMP-3-deoxy-D-manno-octulosonate and lipid IV(A): step 4/4. Its pathway is bacterial outer membrane biogenesis; lipopolysaccharide biosynthesis. Catalyzes the transfer of an acyl chain from an acyl-[acyl-carrier-protein] (ACP) to a Kdo(2)-(acyl)-lipid IV(A) to form a Kdo(2)-lipid A. The chain is Lipid A biosynthesis acyltransferase from Haemophilus influenzae (strain ATCC 51907 / DSM 11121 / KW20 / Rd).